A 308-amino-acid chain; its full sequence is Ribonuclease Z (308 aa).

7 residues coordinate Zn(2+): His-62, His-64, Asp-66, His-67, His-140, Asp-211, and His-269. Asp-66 functions as the Proton acceptor in the catalytic mechanism.

It belongs to the RNase Z family. In terms of assembly, homodimer. The cofactor is Zn(2+).

The enzyme catalyses Endonucleolytic cleavage of RNA, removing extra 3' nucleotides from tRNA precursor, generating 3' termini of tRNAs. A 3'-hydroxy group is left at the tRNA terminus and a 5'-phosphoryl group is left at the trailer molecule.. Its function is as follows. Zinc phosphodiesterase, which displays some tRNA 3'-processing endonuclease activity. Probably involved in tRNA maturation, by removing a 3'-trailer from precursor tRNA. The chain is Ribonuclease Z from Treponema denticola (strain ATCC 35405 / DSM 14222 / CIP 103919 / JCM 8153 / KCTC 15104).